Reading from the N-terminus, the 189-residue chain is Threonylcarbamoyl-AMP synthase (189 aa).

The region spanning 6-189 is the YrdC-like domain; that stretch reads SPAFESVLTA…ALTGELYRQG (184 aa).

It belongs to the SUA5 family. TsaC subfamily.

It is found in the cytoplasm. It carries out the reaction L-threonine + hydrogencarbonate + ATP = L-threonylcarbamoyladenylate + diphosphate + H2O. In terms of biological role, required for the formation of a threonylcarbamoyl group on adenosine at position 37 (t(6)A37) in tRNAs that read codons beginning with adenine. Catalyzes the conversion of L-threonine, HCO(3)(-)/CO(2) and ATP to give threonylcarbamoyl-AMP (TC-AMP) as the acyladenylate intermediate, with the release of diphosphate. The protein is Threonylcarbamoyl-AMP synthase of Photorhabdus laumondii subsp. laumondii (strain DSM 15139 / CIP 105565 / TT01) (Photorhabdus luminescens subsp. laumondii).